A 124-amino-acid chain; its full sequence is Orexigenic neuropeptide QRFP (124 aa).

The N-terminal stretch at 1–17 (MRGFRPLLSLLLPLSAC) is a signal peptide. The propeptide occupies 18-79 (FPLLDRRGPT…REHTGFRLGR (62 aa)). Positions 63 to 101 (REQQASHREHTGFRLGRQDGSSEAAGFLPADSEKASGPL) are disordered. At Phe122 the chain carries Phenylalanine amide.

This sequence belongs to the RFamide neuropeptide family. In terms of assembly, ligand for the G-protein coupled receptor QRFPR/GPR103. In terms of tissue distribution, expressed in the brain with highest levels in the periventricular hypothalamic nucleus and lateral hypothalamic areas. Expressed at moderate levels in the adrenal gland, eye, heart, intestine, liver, lung, kidney, mesenteric lymph node, ovary, placenta, Peyer patches, skin, spleen, stomach, testis, thymus and uterus.

The protein resides in the secreted. Its function is as follows. Stimulates feeding and grooming behavior, metabolic rate and locomotor activity and increases blood pressure. May have orexigenic activity. May promote aldosterone secretion by the adrenal gland. The sequence is that of Orexigenic neuropeptide QRFP from Mus musculus (Mouse).